The sequence spans 144 residues: HTH-type transcriptional regulator BilQ (144 aa).

The HTH marR-type domain maps to 1–134 (MEQTFAYYTT…LFTLLQKLGK (134 aa)). The segment at residues 48-71 (QRELAAAVRADEGYAARSVEKLLQ) is a DNA-binding region (H-T-H motif).

Its function is as follows. Transcription regulator that regulates expression of the bilirubin reductase operon (bilQ, bilR and bilS). This chain is HTH-type transcriptional regulator BilQ, found in Clostridium symbiosum (strain WAL-14163).